A 352-amino-acid chain; its full sequence is Histidinol-phosphate aminotransferase (352 aa).

Position 208 is an N6-(pyridoxal phosphate)lysine (Lys-208).

This sequence belongs to the class-II pyridoxal-phosphate-dependent aminotransferase family. Histidinol-phosphate aminotransferase subfamily. Homodimer. Requires pyridoxal 5'-phosphate as cofactor.

It carries out the reaction L-histidinol phosphate + 2-oxoglutarate = 3-(imidazol-4-yl)-2-oxopropyl phosphate + L-glutamate. It functions in the pathway amino-acid biosynthesis; L-histidine biosynthesis; L-histidine from 5-phospho-alpha-D-ribose 1-diphosphate: step 7/9. The protein is Histidinol-phosphate aminotransferase of Streptococcus sanguinis (strain SK36).